The chain runs to 253 residues: MRKTFLAGNWKMHYTSAEASIVAKKIATEVKTLKDDVVIMITPPFTALSKVSECIKGSNILLGAQNMSYMESGARTSEISPSMLLEFGVEYVILGHSECRLYLAETDEIINKKILAGLKHPFKYLILCVGETLDERDSGKTLEVVLNQVKKGLNCVSESDIQRIILAYEPVWAIGTGKTATKEEAEEVHKAIRLEITKLYSKSASDNIIIQYGGSVNSNNVKELMNEPNIDGALIGGASLKAESFLSIINNVL.

A substrate-binding site is contributed by asparagine 9–lysine 11. The active-site Electrophile is histidine 96. Glutamate 169 (proton acceptor) is an active-site residue. Residues glycine 175, serine 215, and glycine 236–glycine 237 contribute to the substrate site.

The protein belongs to the triosephosphate isomerase family. In terms of assembly, homodimer.

It is found in the cytoplasm. The catalysed reaction is D-glyceraldehyde 3-phosphate = dihydroxyacetone phosphate. Its pathway is carbohydrate biosynthesis; gluconeogenesis. The protein operates within carbohydrate degradation; glycolysis; D-glyceraldehyde 3-phosphate from glycerone phosphate: step 1/1. Its function is as follows. Involved in the gluconeogenesis. Catalyzes stereospecifically the conversion of dihydroxyacetone phosphate (DHAP) to D-glyceraldehyde-3-phosphate (G3P). This is Triosephosphate isomerase from Borreliella burgdorferi (strain ZS7) (Borrelia burgdorferi).